Here is a 689-residue protein sequence, read N- to C-terminus: 1,4-alpha-glucan-branching enzyme (689 aa).

(1,4-alpha-D-glucosyl)n-binding residues include W93 and K128. Catalysis depends on D345, which acts as the Nucleophile. The active-site Proton donor is the E400.

This sequence belongs to the glycosyl hydrolase 13 family. GlgB subfamily.

The protein localises to the cytoplasm. It carries out the reaction Transfers a segment of a (1-&gt;4)-alpha-D-glucan chain to a primary hydroxy group in a similar glucan chain.. It functions in the pathway glycan biosynthesis; glycogen biosynthesis. Glycogen-branching enzyme participates in the glycogen biosynthetic process along with glycogenin and glycogen synthase. Generates alpha-1,6-glucosidic branches from alpha-1,4-linked glucose chains, to increase solubility of the glycogen polymer. This is 1,4-alpha-glucan-branching enzyme (gbeA) from Aspergillus oryzae (strain ATCC 42149 / RIB 40) (Yellow koji mold).